The following is a 335-amino-acid chain: tRNA pseudouridine synthase D (335 aa).

Aspartate 77 functions as the Nucleophile in the catalytic mechanism. In terms of domain architecture, TRUD spans 152 to 308 (GFPNYFTEQR…AQHLSWSFIP (157 aa)).

This sequence belongs to the pseudouridine synthase TruD family.

It carries out the reaction uridine(13) in tRNA = pseudouridine(13) in tRNA. Functionally, responsible for synthesis of pseudouridine from uracil-13 in transfer RNAs. The sequence is that of tRNA pseudouridine synthase D from Histophilus somni (strain 129Pt) (Haemophilus somnus).